Here is a 62-residue protein sequence, read N- to C-terminus: Potassium channel toxin kappa-KTx 3.2 (62 aa).

Positions 1–26 (MKSTLMTASLLILVLLSIVDYASVYA) are cleaved as a signal peptide. The propeptide occupies 27 to 36 (ELIDSEISME). 2 disulfides stabilise this stretch: Cys43/Cys61 and Cys47/Cys57.

This sequence belongs to the short scorpion toxin superfamily. Potassium channel inhibitor kappa-KTx family. Kappa-KTx 3 subfamily. In terms of tissue distribution, expressed by the venom gland.

Its subcellular location is the secreted. Potassium channel inhibitor (Kv). In Heterometrus petersii (Asian forest scorpion), this protein is Potassium channel toxin kappa-KTx 3.2.